A 616-amino-acid chain; its full sequence is GDP-Man:Man(3)GlcNAc(2)-PP-Dol alpha-1,2-mannosyltransferase (616 aa).

Position 1 (methionine 1) is a topological domain, lumenal. A helical membrane pass occupies residues 2–21; that stretch reads GYLVVIGVIACVAYGILQVV. At 22-199 the chain is on the cytoplasmic side; the sequence is STVLPRLLLV…RLIDGDYWKR (178 aa). An intramembrane region (helical) is located at residues 200 to 220; the sequence is FTLIGQLFGSMVLSWEAMFEL. Topologically, residues 221-460 are cytoplasmic; that stretch reads SPDVWIDTIG…FGLNAMWNEH (240 aa). The helical intramembrane region spans 461-481; that stretch reads FGIGVVEYMSRGVIPLCHASA. The Cytoplasmic portion of the chain corresponds to 482-616; sequence GPLLDIVTNW…ERRSGIEKVY (135 aa).

It belongs to the glycosyltransferase group 1 family.

The protein localises to the endoplasmic reticulum membrane. It catalyses the reaction an alpha-D-Man-(1-&gt;3)-[alpha-D-Man-(1-&gt;6)]-beta-D-Man-(1-&gt;4)-beta-D-GlcNAc-(1-&gt;4)-alpha-D-GlcNAc-diphospho-di-trans,poly-cis-dolichol + 2 GDP-alpha-D-mannose = an alpha-D-Man-(1-&gt;2)-alpha-D-Man-(1-&gt;2)-alpha-D-Man-(1-&gt;3)-[alpha-D-Man-(1-&gt;6)]-beta-D-Man-(1-&gt;4)-beta-D-GlcNAc-(1-&gt;4)-alpha-D-GlcNAc-diphospho-di-trans,poly-cis-dolichol + 2 GDP + 2 H(+). It participates in protein modification; protein glycosylation. GDP-Man:Man(3)GlcNAc(2)-PP-Dol alpha-1,2-mannosyltransferase that operates in the biosynthetic pathway of dolichol-linked oligosaccharides, the glycan precursors employed in protein asparagine (N)-glycosylation. The assembly of dolichol-linked oligosaccharides begins on the cytosolic side of the endoplasmic reticulum membrane and finishes in its lumen. The sequential addition of sugars to dolichol pyrophosphate produces dolichol-linked oligosaccharides containing fourteen sugars, including two GlcNAcs, nine mannoses and three glucoses. Once assembled, the oligosaccharide is transferred from the lipid to nascent proteins by oligosaccharyltransferases. Catalyzes, on the cytoplasmic face of the endoplasmic reticulum, the addition of the fourth and fifth mannose residues to the dolichol-linked oligosaccharide chain, to produce Man(5)GlcNAc(2)-PP-dolichol core oligosaccharide. In Debaryomyces hansenii (strain ATCC 36239 / CBS 767 / BCRC 21394 / JCM 1990 / NBRC 0083 / IGC 2968) (Yeast), this protein is GDP-Man:Man(3)GlcNAc(2)-PP-Dol alpha-1,2-mannosyltransferase (ALG11).